The sequence spans 495 residues: NADH-ubiquinone oxidoreductase chain 4 (495 aa).

11 helical membrane-spanning segments follow: residues 9 to 29 (YSNL…PLFI), 39 to 59 (LIGL…RIQF), 89 to 109 (ISLF…SVGW), 139 to 159 (LLLF…IIGV), 173 to 193 (FFLY…LILF), 214 to 234 (IFLW…VPVH), 272 to 292 (FPEA…IAII), 313 to 333 (VAHM…GIGG), 335 to 355 (ILPM…VGVL), 367 to 387 (YGGL…FTLA), and 413 to 433 (LVAT…LWLY).

The protein belongs to the complex I subunit 4 family.

The protein localises to the mitochondrion membrane. It catalyses the reaction a ubiquinone + NADH + 5 H(+)(in) = a ubiquinol + NAD(+) + 4 H(+)(out). Core subunit of the mitochondrial membrane respiratory chain NADH dehydrogenase (Complex I) that is believed to belong to the minimal assembly required for catalysis. Complex I functions in the transfer of electrons from NADH to the respiratory chain. The immediate electron acceptor for the enzyme is believed to be ubiquinone. This chain is NADH-ubiquinone oxidoreductase chain 4 (ND4), found in Brassica campestris (Field mustard).